Reading from the N-terminus, the 209-residue chain is Imidazole glycerol phosphate synthase subunit HisH (209 aa).

The 205-residue stretch at 1–205 (MIAIIDYGMG…KGVVKQWKSS (205 aa)) folds into the Glutamine amidotransferase type-1 domain. Cysteine 79 (nucleophile) is an active-site residue. Active-site residues include histidine 180 and glutamate 182.

As to quaternary structure, heterodimer of HisH and HisF.

The protein resides in the cytoplasm. The enzyme catalyses 5-[(5-phospho-1-deoxy-D-ribulos-1-ylimino)methylamino]-1-(5-phospho-beta-D-ribosyl)imidazole-4-carboxamide + L-glutamine = D-erythro-1-(imidazol-4-yl)glycerol 3-phosphate + 5-amino-1-(5-phospho-beta-D-ribosyl)imidazole-4-carboxamide + L-glutamate + H(+). The catalysed reaction is L-glutamine + H2O = L-glutamate + NH4(+). It participates in amino-acid biosynthesis; L-histidine biosynthesis; L-histidine from 5-phospho-alpha-D-ribose 1-diphosphate: step 5/9. Its function is as follows. IGPS catalyzes the conversion of PRFAR and glutamine to IGP, AICAR and glutamate. The HisH subunit catalyzes the hydrolysis of glutamine to glutamate and ammonia as part of the synthesis of IGP and AICAR. The resulting ammonia molecule is channeled to the active site of HisF. The protein is Imidazole glycerol phosphate synthase subunit HisH of Bacillus cytotoxicus (strain DSM 22905 / CIP 110041 / 391-98 / NVH 391-98).